The sequence spans 398 residues: Dual-specificity RNA methyltransferase RlmN (398 aa).

E119 serves as the catalytic Proton acceptor. Positions 125 to 364 (EADRATLCVS…TIVRKTRGDD (240 aa)) constitute a Radical SAM core domain. Residues C132 and C369 are joined by a disulfide bond. Residues C139, C143, and C146 each coordinate [4Fe-4S] cluster. Residues 193 to 194 (GE), S225, 247 to 249 (SLH), and N326 contribute to the S-adenosyl-L-methionine site. The active-site S-methylcysteine intermediate is the C369.

It belongs to the radical SAM superfamily. RlmN family. It depends on [4Fe-4S] cluster as a cofactor.

Its subcellular location is the cytoplasm. The catalysed reaction is adenosine(2503) in 23S rRNA + 2 reduced [2Fe-2S]-[ferredoxin] + 2 S-adenosyl-L-methionine = 2-methyladenosine(2503) in 23S rRNA + 5'-deoxyadenosine + L-methionine + 2 oxidized [2Fe-2S]-[ferredoxin] + S-adenosyl-L-homocysteine. It carries out the reaction adenosine(37) in tRNA + 2 reduced [2Fe-2S]-[ferredoxin] + 2 S-adenosyl-L-methionine = 2-methyladenosine(37) in tRNA + 5'-deoxyadenosine + L-methionine + 2 oxidized [2Fe-2S]-[ferredoxin] + S-adenosyl-L-homocysteine. Its function is as follows. Specifically methylates position 2 of adenine 2503 in 23S rRNA and position 2 of adenine 37 in tRNAs. m2A2503 modification seems to play a crucial role in the proofreading step occurring at the peptidyl transferase center and thus would serve to optimize ribosomal fidelity. The protein is Dual-specificity RNA methyltransferase RlmN of Yersinia pseudotuberculosis serotype IB (strain PB1/+).